Reading from the N-terminus, the 128-residue chain is MGDPRCAPLLLLLLLPLLFTPPAGDAAVITGACDKDSQCGGGMCCAVSIWVKSIRICTPMGQVGDSCHPLTRKSHVANGRQERRRAKRRKRKKEVPFWGRRMHHTCPCLPGLACLRTSFNRFICLARK.

The first 26 residues, 1 to 26 (MGDPRCAPLLLLLLLPLLFTPPAGDA), serve as a signal peptide directing secretion. Intrachain disulfides connect cysteine 33/cysteine 45, cysteine 39/cysteine 57, cysteine 44/cysteine 106, cysteine 67/cysteine 114, and cysteine 108/cysteine 124.

The protein belongs to the AVIT (prokineticin) family. As to expression, expressed in the SCN and among a few other discrete brain areas, including the islands of Calleja, media l preoptic area of the hypothalamus and the shell of the nucleus accumbens. Highly expressed in testis. In the SCN, expression subjected to high amplitude of circadian oscillation.

The protein resides in the secreted. Functionally, may function as an output molecule from the suprachiasmatic nucleus (SCN) that transmits behavioral circadian rhythm. May also function locally within the SCN to synchronize output. Potently contracts gastrointestinal (GI) smooth muscle. The protein is Prokineticin-2 (Prok2) of Mus musculus (Mouse).